Consider the following 824-residue polypeptide: Translation initiation factor IF-2 (824 aa).

Residues 1-234 (MSDQDGKKPL…RQKAMGGSVD (234 aa)) form a disordered region. 2 stretches are compositionally biased toward basic and acidic residues: residues 59 to 75 (GGKRDKSVPDAEMDRRL) and 82 to 144 (KARE…RRNA). Low complexity predominate over residues 145–159 (PPEAAAPAVDPAAAA). Residues 170 to 186 (ARREPERDNKRENRSRG) are compositionally biased toward basic and acidic residues. The tr-type G domain maps to 321–491 (PRPPVITIMG…ALQAELLELK (171 aa)). A G1 region spans residues 330–337 (GHVDHGKT). 330–337 (GHVDHGKT) is a GTP binding site. The G2 stretch occupies residues 355-359 (GITQH). Residues 377-380 (DTPG) are G3. GTP contacts are provided by residues 377–381 (DTPGH) and 431–434 (NKID). Positions 431-434 (NKID) are G4. The tract at residues 467-469 (SAM) is G5.

This sequence belongs to the TRAFAC class translation factor GTPase superfamily. Classic translation factor GTPase family. IF-2 subfamily.

It is found in the cytoplasm. Functionally, one of the essential components for the initiation of protein synthesis. Protects formylmethionyl-tRNA from spontaneous hydrolysis and promotes its binding to the 30S ribosomal subunits. Also involved in the hydrolysis of GTP during the formation of the 70S ribosomal complex. The protein is Translation initiation factor IF-2 of Jannaschia sp. (strain CCS1).